Here is a 307-residue protein sequence, read N- to C-terminus: Metapyrocatechase (307 aa).

VOC domains are found at residues 7–122 and 150–269; these read RPGH…LYAD and RFDH…VFCG. Residues histidine 153, histidine 214, and glutamate 265 each coordinate Fe cation.

Belongs to the extradiol ring-cleavage dioxygenase family. Homotetramer. Fe(2+) is required as a cofactor.

It carries out the reaction catechol + O2 = (2Z,4E)-2-hydroxy-6-oxohexa-2,4-dienoate + H(+). The protein operates within aromatic compound metabolism; benzoate degradation via hydroxylation. The sequence is that of Metapyrocatechase (dmpB) from Pseudomonas sp. (strain CF600).